A 328-amino-acid chain; its full sequence is Carbonic anhydrase-related protein 11 (328 aa).

The first 23 residues, methionine 1–alanine 23, serve as a signal peptide directing secretion. The Alpha-carbonic anhydrase domain occupies aspartate 33 to arginine 303. Asparagine 118 carries an N-linked (GlcNAc...) asparagine glycan. The segment at arginine 300–arginine 328 is disordered. Over residues leucine 319–arginine 328 the composition is skewed to basic and acidic residues.

This sequence belongs to the alpha-carbonic anhydrase family.

Its subcellular location is the secreted. Functionally, does not have a catalytic activity. This chain is Carbonic anhydrase-related protein 11 (Ca11), found in Mus musculus (Mouse).